Here is a 397-residue protein sequence, read N- to C-terminus: UDP-galactose translocator (397 aa).

Residues 1 to 21 (MAAVGSGGSNAAAGPGAVSAG) are disordered. Helical transmembrane passes span 3–23 (AVGSGGSNAAAGPGAVSAGSL), 37–57 (YISLAVLVVQNASLILSIRYA), 65–85 (FFATTAVVMAEVLKGLTCLLL), 97–117 (LALFLHEAVLVQYVDTLKLAV), 140–160 (TFQVTYQLKILTTALFSVLML), 169–189 (WASLLLLFTGVAIVQAQQAGG), 200–220 (GAGLAAVVASCLSSGFAGVYF), 238–258 (LGLFGTALGLVGLWWAEGTAV), 269–289 (PAVWGVVLNQAFGGLLVAVVV), and 315–335 (LFGFHVDPLFALGAGLVIGAV). Residues 9-21 (SNAAAGPGAVSAG) show a composition bias toward low complexity. The interval 355 to 397 (ASASTSGPCTHQQPPGQPPPPKLSSHRADLSTEPFLPKSVLVK) is disordered.

It belongs to the nucleotide-sugar transporter family. SLC35A subfamily. As to quaternary structure, interacts with SLC35A3; the interaction is reduced in the presence of SLC35A4. Found in a complex with SLC35A3 and SLC35A4.

It localises to the golgi apparatus membrane. The enzyme catalyses UMP(out) + UDP-alpha-D-galactose(in) = UMP(in) + UDP-alpha-D-galactose(out). It carries out the reaction UDP-N-acetyl-alpha-D-galactosamine(in) + UMP(out) = UDP-N-acetyl-alpha-D-galactosamine(out) + UMP(in). The catalysed reaction is UMP(out) + UDP-alpha-D-glucose(in) = UMP(in) + UDP-alpha-D-glucose(out). It catalyses the reaction UMP(out) + UDP-N-acetyl-alpha-D-glucosamine(in) = UMP(in) + UDP-N-acetyl-alpha-D-glucosamine(out). The enzyme catalyses UDP-alpha-D-galactose(in) + AMP(out) = UDP-alpha-D-galactose(out) + AMP(in). It carries out the reaction UDP-alpha-D-galactose(in) + CMP(out) = UDP-alpha-D-galactose(out) + CMP(in). The catalysed reaction is UDP-N-acetyl-alpha-D-galactosamine(out) + UDP-alpha-D-galactose(in) = UDP-N-acetyl-alpha-D-galactosamine(in) + UDP-alpha-D-galactose(out). It catalyses the reaction UDP-N-acetyl-alpha-D-glucosamine(out) + UDP-alpha-D-galactose(in) = UDP-N-acetyl-alpha-D-glucosamine(in) + UDP-alpha-D-galactose(out). The enzyme catalyses UDP-alpha-D-galactose(in) + UDP-alpha-D-glucose(out) = UDP-alpha-D-galactose(out) + UDP-alpha-D-glucose(in). It carries out the reaction UMP(out) + CMP(in) = UMP(in) + CMP(out). The catalysed reaction is UMP(out) + AMP(in) = UMP(in) + AMP(out). Its function is as follows. Transports uridine diphosphate galactose (UDP-galactose) from the cytosol into the Golgi apparatus, functioning as an antiporter that exchanges UDP-galactose for UMP. It is also able to exchange UDP-galactose for AMP and CMP, and to transport UDP-N-acetylgalactosamine (UDP-GalNAc) and other nucleotide sugars. As a provider of UDP-galactose to galactosyltransferases present in the Golgi apparatus, it is necessary for globotriaosylceramide/globoside (Gb3Cer) synthesis from lactosylceramide. The polypeptide is UDP-galactose translocator (Canis lupus familiaris (Dog)).